We begin with the raw amino-acid sequence, 1732 residues long: Polycystin-1-like protein 3 (1732 aa).

The first 23 residues, 1 to 23 (MFFKGGSWLWLYIRTSIILGSEL), serve as a signal peptide directing secretion. Topologically, residues 24–697 (NSPAPHGQNN…IKLFLRVTNN (674 aa)) are extracellular. The region spanning 30–138 (GQNNCYQLNR…CLLKYYFICQ (109 aa)) is the C-type lectin domain. 2 disulfides stabilise this stretch: cysteine 51–cysteine 137 and cysteine 112–cysteine 129. N-linked (GlcNAc...) asparagine glycans are attached at residues asparagine 286, asparagine 363, asparagine 515, asparagine 537, and asparagine 575. One can recognise a GAIN-B domain in the interval 523–685 (TSLNMSTHQL…FVVPRTVNVE (163 aa)). Disulfide bonds link cysteine 635-cysteine 663 and cysteine 650-cysteine 665. The segment at 635-685 (CYYWEIHNQTWSSAGCQVGPQSTILRTQCLCNHLTFFASDFFVVPRTVNVE) is GPS. A helical membrane pass occupies residues 698–718 (PVGVSLLASLLGFYVITVVWA). The Cytoplasmic segment spans residues 719–905 (RKKDQADMQK…PWNQFTRVQR (187 aa)). A PLAT domain is found at 743-860 (FHYLIQVYTG…GDCELDRVFI (118 aa)). A helical membrane pass occupies residues 906–926 (LSCCMTLLLCNMVINVMFWKI). Topologically, residues 927 to 939 (NSTTAKRDEQMRP) are extracellular. Residues 940-960 (FAVAWSELLVSIHTAVILFPI) form a helical membrane-spanning segment. Residues 961–1154 (NLVIGRLFPL…ISNGLSKWLT (194 aa)) lie on the Cytoplasmic side of the membrane. Residues 1155-1175 (SVCWLLLGFTSLASAFFTALY) form a helical membrane-spanning segment. The Extracellular segment spans residues 1176–1198 (SLELSKDQATSWMISIILSVLQN). The chain crosses the membrane as a helical span at residues 1199–1219 (IFISQPVKVVFFTFLYSLMMS). Topologically, residues 1220–1289 (RMPRLNKENE…KLTGDILVQI (70 aa)) are cytoplasmic. Residues 1290–1300 (LFLTLLMTAIY) traverse the membrane as a helical segment. Topologically, residues 1301 to 1461 (SAKNSNRFYL…SFTSLQMSKK (161 aa)) are extracellular. Residues 1462-1491 (GCVWSIISQVIYYLLVCYYAFIQGCQLKQQ) form a helical membrane-spanning segment. Over 1492–1500 (KWRFFTGKR) the chain is Cytoplasmic. The chain crosses the membrane as a helical span at residues 1501–1519 (NILDTSIILISFILLGLDM). Over 1520 to 1550 (KSISLHKKNMARYRDDQDRFISFYEAVKVNS) the chain is Extracellular. A helical transmembrane segment spans residues 1551 to 1572 (AATHLVGFPVLLATVQLWNLLR). Over 1573-1589 (HSPRLRVISRTLSRAWD) the chain is Cytoplasmic. A helical membrane pass occupies residues 1590 to 1614 (EVVGFLLIILILLTGYAIAFNLLFG). Residues 1613 to 1651 (FGCSISDYRTFFSSAVTVVGLLMGISHQEEVFALDPVLG) form a channel pore-region region. Topologically, residues 1615 to 1647 (CSISDYRTFFSSAVTVVGLLMGISHQEEVFALD) are extracellular. Residues 1648-1667 (PVLGTFLILTSVILMVLVVI) form a helical membrane-spanning segment. The Cytoplasmic segment spans residues 1668–1732 (NLFVSAILMA…SDTEVLDELP (65 aa)).

It belongs to the polycystin family. In terms of assembly, heterotetramer with PKD2L1, composed of 3 subunit of PKD2L1 and 1 subunit of PKD1L3. Post-translationally, autoproteolytically processed at the GPS region of the GAIN-B domain; this cleavage modulates receptor activity. Highly expressed in placenta, weakly in heart and lung.

It is found in the cell membrane. The enzyme catalyses Ca(2+)(in) = Ca(2+)(out). It carries out the reaction Na(+)(in) = Na(+)(out). The catalysed reaction is K(+)(in) = K(+)(out). It catalyses the reaction Mg(2+)(in) = Mg(2+)(out). With respect to regulation, the non-selective cation channel is gated following an off-response property by acid: gated open after the removal of acid stimulus, but not during acid application. Regulation of non-selective cation channel activity by external Ca(2+) is bimodal, first sensitizing and subsequently inactivating the current. Functionally, pore-forming subunit of a heterotetrameric, non-selective cation channel that is permeable to Ca(2+). Also shows permeability towards NA(1+), K(+) and Mg(2+). Heterotetrameric complex channel is activated by external low pH and Ca(2+), but opens only when the extracellular pH rises again and after the removal of acid stimulus. May act as a sour taste receptor in gustatory cells; however, its contribution to sour taste perception is unclear in vivo and may be indirect. The polypeptide is Polycystin-1-like protein 3 (Homo sapiens (Human)).